The following is a 520-amino-acid chain: GMP synthase [glutamine-hydrolyzing] (520 aa).

Positions 9–202 (TVLIVDFGSQ…VHKIAGIKGD (194 aa)) constitute a Glutamine amidotransferase type-1 domain. The active-site Nucleophile is the Cys86. Active-site residues include His176 and Glu178. Residues 203–395 (WTMSAYRAKA…LGLPESFIGR (193 aa)) enclose the GMPS ATP-PPase domain. Residue 230 to 236 (SGGVDSS) participates in ATP binding.

Homodimer.

It catalyses the reaction XMP + L-glutamine + ATP + H2O = GMP + L-glutamate + AMP + diphosphate + 2 H(+). Its pathway is purine metabolism; GMP biosynthesis; GMP from XMP (L-Gln route): step 1/1. In terms of biological role, catalyzes the synthesis of GMP from XMP. This is GMP synthase [glutamine-hydrolyzing] from Sinorhizobium fredii (strain NBRC 101917 / NGR234).